Here is a 207-residue protein sequence, read N- to C-terminus: Dephospho-CoA kinase (207 aa).

The DPCK domain occupies 5 to 203; sequence AVGLTGGVAC…ARYRALASVF (199 aa). 13-18 provides a ligand contact to ATP; it reads ACGKSL.

The protein belongs to the CoaE family.

Its subcellular location is the cytoplasm. The enzyme catalyses 3'-dephospho-CoA + ATP = ADP + CoA + H(+). It functions in the pathway cofactor biosynthesis; coenzyme A biosynthesis; CoA from (R)-pantothenate: step 5/5. Its function is as follows. Catalyzes the phosphorylation of the 3'-hydroxyl group of dephosphocoenzyme A to form coenzyme A. This is Dephospho-CoA kinase from Xylella fastidiosa (strain Temecula1 / ATCC 700964).